Reading from the N-terminus, the 313-residue chain is Biotin synthase (313 aa).

Positions 28 to 258 (NFGNDIELCS…LFPQARLRLS (231 aa)) constitute a Radical SAM core domain. [4Fe-4S] cluster contacts are provided by C46, C50, and C53. 4 residues coordinate [2Fe-2S] cluster: C90, C121, C181, and R256.

Belongs to the radical SAM superfamily. Biotin synthase family. As to quaternary structure, homodimer. [4Fe-4S] cluster is required as a cofactor. [2Fe-2S] cluster serves as cofactor.

It catalyses the reaction (4R,5S)-dethiobiotin + (sulfur carrier)-SH + 2 reduced [2Fe-2S]-[ferredoxin] + 2 S-adenosyl-L-methionine = (sulfur carrier)-H + biotin + 2 5'-deoxyadenosine + 2 L-methionine + 2 oxidized [2Fe-2S]-[ferredoxin]. It functions in the pathway cofactor biosynthesis; biotin biosynthesis; biotin from 7,8-diaminononanoate: step 2/2. Functionally, catalyzes the conversion of dethiobiotin (DTB) to biotin by the insertion of a sulfur atom into dethiobiotin via a radical-based mechanism. The chain is Biotin synthase from Francisella tularensis subsp. tularensis (strain WY96-3418).